We begin with the raw amino-acid sequence, 310 residues long: Apolipoprotein E (310 aa).

The first 18 residues, 1-18 (MKALWAVLLATLLTGCLS), serve as a signal peptide directing secretion. Tandem repeats lie at residues 72-93 (VLME…EQLG), 94-115 (PVAE…ARLG), 116-137 (ADME…TMLG), 138-159 (QSTE…KRLM), 160-181 (RDAE…EGAE), 182-203 (RGVS…QRTA), 204-225 (NLGA…DRLR), and 226-247 (GRLE…EHME). Residues 72 to 247 (VLMEDTMTEV…RLEEMREHME (176 aa)) form an 8 X 22 AA approximate tandem repeats region. Residue M135 is modified to Methionine sulfoxide. Positions 150–160 (HLRKMRKRLMR) are LDL and other lipoprotein receptors binding. The segment at 150-160 (HLRKMRKRLMR) is LDL receptor binding. Residue 154-157 (MRKR) participates in heparin binding. Positions 202–282 (TANLGAGVAQ…GWFEPLVEDM (81 aa)) are lipid-binding and lipoprotein association. 221-228 (GDRLRGRL) contributes to the heparin binding site. The interval 258-310 (QQIRLQAEIFQARLKGWFEPLVEDMQRQLANLVEKIQASTNSVLSTSVPQENQ) is homooligomerization. The tract at residues 270-282 (RLKGWFEPLVEDM) is specificity for association with VLDL.

This sequence belongs to the apolipoprotein A1/A4/E family. As to quaternary structure, homotetramer. May interact with ABCA1; functionally associated with ABCA1 in the biogenesis of HDLs. May interact with APP/A4 amyloid-beta peptide; the interaction is extremely stable in vitro but its physiological significance is unclear. May interact with MAPT. May interact with MAP2. In the cerebrospinal fluid, interacts with secreted SORL1. Interacts with PMEL; this allows the loading of PMEL luminal fragment on ILVs to induce fibril nucleation. Post-translationally, APOE exists as multiple glycosylated and sialylated glycoforms within cells and in plasma. The extent of glycosylation and sialylation are tissue and context specific. In terms of processing, glycated in plasma VLDL. Phosphorylated by FAM20C in the extracellular medium.

It localises to the secreted. The protein resides in the extracellular space. The protein localises to the extracellular matrix. It is found in the extracellular vesicle. Its subcellular location is the endosome. It localises to the multivesicular body. APOE is an apolipoprotein, a protein associating with lipid particles, that mainly functions in lipoprotein-mediated lipid transport between organs via the plasma and interstitial fluids. APOE is a core component of plasma lipoproteins and is involved in their production, conversion and clearance. Apolipoproteins are amphipathic molecules that interact both with lipids of the lipoprotein particle core and the aqueous environment of the plasma. As such, APOE associates with chylomicrons, chylomicron remnants, very low density lipoproteins (VLDL) and intermediate density lipoproteins (IDL) but shows a preferential binding to high-density lipoproteins (HDL). It also binds a wide range of cellular receptors including the LDL receptor/LDLR, the LDL receptor-related proteins LRP1, LRP2 and LRP8 and the very low-density lipoprotein receptor/VLDLR that mediate the cellular uptake of the APOE-containing lipoprotein particles. Finally, APOE also has a heparin-binding activity and binds heparan-sulfate proteoglycans on the surface of cells, a property that supports the capture and the receptor-mediated uptake of APOE-containing lipoproteins by cells. A main function of APOE is to mediate lipoprotein clearance through the uptake of chylomicrons, VLDLs, and HDLs by hepatocytes. APOE is also involved in the biosynthesis by the liver of VLDLs as well as their uptake by peripheral tissues ensuring the delivery of triglycerides and energy storage in muscle, heart and adipose tissues. By participating in the lipoprotein-mediated distribution of lipids among tissues, APOE plays a critical role in plasma and tissues lipid homeostasis. APOE is also involved in two steps of reverse cholesterol transport, the HDLs-mediated transport of cholesterol from peripheral tissues to the liver, and thereby plays an important role in cholesterol homeostasis. First, it is functionally associated with ABCA1 in the biogenesis of HDLs in tissues. Second, it is enriched in circulating HDLs and mediates their uptake by hepatocytes. APOE also plays an important role in lipid transport in the central nervous system, regulating neuron survival and sprouting. The protein is Apolipoprotein E (Apoe) of Grammomys surdaster (African woodland thicket rat).